A 656-amino-acid polypeptide reads, in one-letter code: Leucine aminopeptidase 2 (656 aa).

Residues 173-175 and 302-307 contribute to the substrate site; these read QLE and PYGGME. Residue H331 participates in Zn(2+) binding. Residue E332 is the Proton acceptor of the active site. H335 and E354 together coordinate Zn(2+). Catalysis depends on Y420, which acts as the Proton donor.

Belongs to the peptidase M1 family. The cofactor is Zn(2+).

It is found in the cytoplasm. The protein localises to the nucleus. It carries out the reaction an epoxide + H2O = an ethanediol. Aminopeptidase that preferentially cleaves di- and tripeptides. Also has low epoxide hydrolase activity (in vitro). Can hydrolyze the epoxide leukotriene LTA(4) but it forms preferentially 5,6-dihydroxy-7,9,11,14-eicosatetraenoic acid rather than the cytokine leukotriene B(4) as the product compared to the homologous mammalian enzyme (in vitro). The sequence is that of Leucine aminopeptidase 2 from Vanderwaltozyma polyspora (strain ATCC 22028 / DSM 70294 / BCRC 21397 / CBS 2163 / NBRC 10782 / NRRL Y-8283 / UCD 57-17) (Kluyveromyces polysporus).